A 115-amino-acid polypeptide reads, in one-letter code: Histone H2A-Bbd type 2/3 (115 aa).

A disordered region spans residues 1–21 (MPRRRRRRGSSGAGGRGRTCS). Residues 87–115 (LLDMVVHNDRLLSTLFNTTTISQVAPGED) are docking domain.

This sequence belongs to the histone H2A family. As to quaternary structure, the nucleosome is a histone octamer containing two molecules each of H2A, H2B, H3 and H4 assembled in one H3-H4 heterotetramer and two H2A-H2B heterodimers. May be incorporated into a proportion of nucleosomes, replacing one or more H2A molecules. As to expression, present in mature sperm.

It is found in the nucleus. It localises to the chromosome. Atypical histone H2A which can replace conventional H2A in some nucleosomes and is associated with active transcription and mRNA processing. Nucleosomes wrap and compact DNA into chromatin, limiting DNA accessibility to the cellular machineries which require DNA as a template. Histones thereby play a central role in transcription regulation, DNA repair, DNA replication and chromosomal stability. Nucleosomes containing this histone are less rigid and organize less DNA than canonical nucleosomes in vivo. They are enriched in actively transcribed genes and associate with the elongating form of RNA polymerase. They associate with spliceosome components and are required for mRNA splicing. May participate in spermatogenesis. The polypeptide is Histone H2A-Bbd type 2/3 (Homo sapiens (Human)).